A 64-amino-acid polypeptide reads, in one-letter code: uncharacterized protein (64 aa).

The segment at methionine 1–serine 64 is disordered. The segment covering arginine 16–glycine 28 has biased composition (gly residues).

This is an uncharacterized protein from Homo sapiens (Human).